The chain runs to 1039 residues: FHIP family protein GG24907 (1039 aa).

Phosphoserine occurs at positions 498 and 805. Disordered stretches follow at residues 831 to 877 (ATPT…SASS), 904 to 945 (GISQ…SNSS), and 957 to 984 (SNTT…SEPA). Composition is skewed to polar residues over residues 855-877 (TSMF…SASS) and 904-924 (GISQ…TQPQ). The segment covering 925-945 (AGASRTGATATSAAASGSNSS) has biased composition (low complexity). A compositionally biased stretch (polar residues) spans 957 to 966 (SNTTTHSAST).

This sequence belongs to the FHIP family.

In Drosophila erecta (Fruit fly), this protein is FHIP family protein GG24907.